Here is a 276-residue protein sequence, read N- to C-terminus: MKAQILREMKVLKAIEPEFEVQRRVAFIKTKLKEARSKALVLGISGGVDSSTAGRLCQLAINSLNSEHPEGGYQFIAVRLPYQIQKDEHEAQQACQFIQPSKLVTVNVHQGVDGVHQATLSAFIDAGLTTPDAAKVDFIKGNVKARMRMIAQYELAGLVGGLVVGTDHSAENITGFYTKWGDGACDLAPLFGLNKRQVRQLAAYLGAPESLVYKAPTADLEDNKPLLEDEVALGLTYEQIDDFLEGKVVDKAVEEKLINIYKATQHKRQPIPTIYD.

An ATP-binding site is contributed by 43–50; sequence GISGGVDS. Asp49 provides a ligand contact to Mg(2+). Arg146 is a binding site for deamido-NAD(+). Residue Thr166 coordinates ATP. A Mg(2+)-binding site is contributed by Glu171. 2 residues coordinate deamido-NAD(+): Lys179 and Asp186. ATP-binding residues include Lys195 and Thr217. 266–267 lines the deamido-NAD(+) pocket; sequence HK.

It belongs to the NAD synthetase family. Homodimer.

It carries out the reaction deamido-NAD(+) + NH4(+) + ATP = AMP + diphosphate + NAD(+) + H(+). It participates in cofactor biosynthesis; NAD(+) biosynthesis; NAD(+) from deamido-NAD(+) (ammonia route): step 1/1. Its function is as follows. Catalyzes the ATP-dependent amidation of deamido-NAD to form NAD. Uses ammonia as a nitrogen source. In Shewanella oneidensis (strain ATCC 700550 / JCM 31522 / CIP 106686 / LMG 19005 / NCIMB 14063 / MR-1), this protein is NH(3)-dependent NAD(+) synthetase.